Consider the following 812-residue polypeptide: DNA translocase FtsK 1 (812 aa).

Residues 1–11 (MTEKSHKKTAK) show a composition bias toward basic residues. A disordered region spans residues 1–36 (MTEKSHKKTAKGRAGSPSPTSARNKKADNGARGNKV). Basic and acidic residues predominate over residues 25–36 (KKADNGARGNKV). 5 helical membrane-spanning segments follow: residues 63 to 83 (IGDA…ISLI), 116 to 136 (VGYY…CVML), 156 to 176 (IAAA…YFVL), 184 to 204 (LPVG…AWLL), and 210 to 230 (LLII…ISWL). Topologically, residues 231–812 (EFLNGAGRAV…RKILAHKDHL (582 aa)) are cytoplasmic. The 210-residue stretch at 461 to 670 (GTPVVGDLAK…FTVQSKIDSR (210 aa)) folds into the FtsK domain. 481–486 (GSGKSV) is an ATP binding site.

It belongs to the FtsK/SpoIIIE/SftA family. As to quaternary structure, homohexamer. Forms a ring that surrounds DNA.

The protein resides in the cell inner membrane. Functionally, essential cell division protein that coordinates cell division and chromosome segregation. The N-terminus is involved in assembly of the cell-division machinery. The C-terminus functions as a DNA motor that moves dsDNA in an ATP-dependent manner towards the dif recombination site, which is located within the replication terminus region. Translocation stops specifically at Xer-dif sites, where FtsK interacts with the Xer recombinase, allowing activation of chromosome unlinking by recombination. FtsK orienting polar sequences (KOPS) guide the direction of DNA translocation. FtsK can remove proteins from DNA as it translocates, but translocation stops specifically at XerCD-dif site, thereby preventing removal of XerC and XerD from dif. This is DNA translocase FtsK 1 (ftsK1) from Neisseria meningitidis serogroup A / serotype 4A (strain DSM 15465 / Z2491).